A 1374-amino-acid polypeptide reads, in one-letter code: DNA-directed RNA polymerase subunit beta (1374 aa).

The protein belongs to the RNA polymerase beta chain family. In terms of assembly, the RNAP catalytic core consists of 2 alpha, 1 beta, 1 beta' and 1 omega subunit. When a sigma factor is associated with the core the holoenzyme is formed, which can initiate transcription.

The enzyme catalyses RNA(n) + a ribonucleoside 5'-triphosphate = RNA(n+1) + diphosphate. Functionally, DNA-dependent RNA polymerase catalyzes the transcription of DNA into RNA using the four ribonucleoside triphosphates as substrates. The sequence is that of DNA-directed RNA polymerase subunit beta from Methylobacterium nodulans (strain LMG 21967 / CNCM I-2342 / ORS 2060).